The sequence spans 128 residues: Nascent polypeptide-associated complex protein (128 aa).

In terms of domain architecture, NAC-A/B spans 8-75 (PRMLKKMQKM…PKKIKKEKVE (68 aa)).

This sequence belongs to the NAC-alpha family. As to quaternary structure, homodimer. Interacts with the ribosome. Binds ribosomal RNA.

In terms of biological role, contacts the emerging nascent chain on the ribosome. The chain is Nascent polypeptide-associated complex protein from Methanocaldococcus jannaschii (strain ATCC 43067 / DSM 2661 / JAL-1 / JCM 10045 / NBRC 100440) (Methanococcus jannaschii).